A 919-amino-acid polypeptide reads, in one-letter code: MNMNFSFCSTSSELSYPSENVLRFSVASRLFSPKWKKSFISLPCRSKTTRKVLASSRYVPGKLEDLSVVKKSLPRREPVEKLGFVRTLLIDNYDSYTFNIYQALSTINGVPPVVIRNDEWTWEEAYHYLYEDVAFDNIVISPGPGSPMCPADIGICLRLLLECRDIPILGVCLGHQALGYVHGAHVVHAPEPVHGRLSGIEHDGNILFSDIPSGRNSDFKVVRYHSLIIDKESLPKELVPIAWTIYDDTGSFSEKNSCVPVNNTGSPLGNGSVIPVSEKLENRSHWPSSHVNGKQDRHILMGIMHSSFPHYGLQFHPESIATTYGSQLFKNFKDITVNYWSRCKSTSLRRRNINDTANMQVPDATQLLKELSRTRCTGNGSSYFGNPKSLFSAKTNGVDVFDMVDSSYPKPHTKLLRLKWKKHERLAHKVGGVRNIFMELFGKNRGNDTFWLDTSSSDKARGRFSFMGGKGGSLWKQLTFSLSDQSEVTSKHAGHLLIEDSQSSTEKQFLEEGFLDFLRKELSSISYDEKDFEELPFDFCGGYVGCIGYDIKVECGMPINRHKSNAPDACFFFADNVVAIDHQLDDVYILSLYEEGTAETSFLNDTEEKLISLMGLSTRKLEDQTLPVIDSSQSKTSFVPDKSREQYINDVQSCMKYIKDGESYELCLTTQNRRKIGNADPLGLYLHLRERNPAPYAAFLNFSNANLSLCSSSPERFLKLDRNGMLEAKPIKGTIARGSTPEEDEFLKLQLKLSEKNQAENLMIVDLLRNDLGRVCEPGSVHVPNLMDVESYTTVHTMVSTIRGLKKTDISPVECVRAAFPGGSMTGAPKLRSVEILDSLENCSRGLYSGSIGYFSYNGTFDLNIVIRTVIIHEDEASIGAGGAIVALSSPEDEFEEMILKTRAPANAVMEFCSDQRRQ.

The transit peptide at 1–45 directs the protein to the chloroplast; it reads MNMNFSFCSTSSELSYPSENVLRFSVASRLFSPKWKKSFISLPCR. The region spanning 86 to 342 is the Glutamine amidotransferase type-1 domain; it reads RTLLIDNYDS…KDITVNYWSR (257 aa). Cys172 functions as the Nucleophile in the catalytic mechanism. Catalysis depends on residues His316 and Glu318. Residues 436 to 910 form a PABB component region; sequence IFMELFGKNR…KTRAPANAVM (475 aa).

This sequence in the C-terminal section; belongs to the anthranilate synthase component I family.

The protein resides in the plastid. It localises to the chloroplast. It catalyses the reaction chorismate + L-glutamine = 4-amino-4-deoxychorismate + L-glutamate. Its pathway is cofactor biosynthesis; tetrahydrofolate biosynthesis; 4-aminobenzoate from chorismate: step 1/2. Its activity is regulated as follows. Activated by chorismate and inhibited by dihydrofolate and methotrexate. Bifunctional enzyme that catalyzes the biosynthesis of 4-amino-4-deoxychorismate (ADC) from chorismate and glutamine. In the first step, a glutamine amidotransferase generates ammonia that is channelled between the binding sites of glutamine and chorismate and used along with chorismate in the second step, catalyzed by aminodeoxychorismate synthase, to produce ADC. Required for the synthesis of 4-aminobenzoate (PABA), an important component in tetrahydrofolate biosynthesis. Does not possess ADC lyase activity. This chain is Aminodeoxychorismate synthase, chloroplastic (ADCS), found in Arabidopsis thaliana (Mouse-ear cress).